We begin with the raw amino-acid sequence, 425 residues long: Tyrosine--tRNA ligase (425 aa).

Tyr-34 contributes to the L-tyrosine binding site. The 'HIGH' region signature appears at 39-48; sequence PTADSLHVGN. The L-tyrosine site is built by Tyr-171 and Gln-175. Positions 231 to 235 match the 'KMSKS' region motif; it reads KYGKS. Lys-234 provides a ligand contact to ATP. Positions 358-424 constitute an S4 RNA-binding domain; it reads APLVELLVHA…GKRTYTVVKI (67 aa).

This sequence belongs to the class-I aminoacyl-tRNA synthetase family. TyrS type 1 subfamily. Homodimer.

The protein resides in the cytoplasm. It catalyses the reaction tRNA(Tyr) + L-tyrosine + ATP = L-tyrosyl-tRNA(Tyr) + AMP + diphosphate + H(+). In terms of biological role, catalyzes the attachment of tyrosine to tRNA(Tyr) in a two-step reaction: tyrosine is first activated by ATP to form Tyr-AMP and then transferred to the acceptor end of tRNA(Tyr). This chain is Tyrosine--tRNA ligase, found in Opitutus terrae (strain DSM 11246 / JCM 15787 / PB90-1).